The primary structure comprises 769 residues: MLDSFKEDPNLRKLLFSGHFGLEKENIRVTSDGKLALTPHPAIFGPKEDNPYIKTDFSESQIEMITPVTDSIDSVYEWLENLHNIVSLRSENELLWPSSNPPILPAEEDIPIAEYKTPDSPDRKYREHLAKGYGKKIQLLSGIHYNFSFPEALIDGLYANISLPEESKQDFKNRLYLKVAKYFMKNRWLLIYLTGASPVYLADFSKTKHEESLPDGSSALRDGISLRNSNAGYKNKEALFVDYNSFDAYISSISNYIEAGKIESMREFYNPIRLKNAHTDQTVESLAEHGVEYLEIRSIDLNPLEPNGISKDELDFIHLFLIKGLLSEDRELCANNQQLADENENNIALNGLAQPSIKNCDNEDIPLADAGLLELDKMSDFIKSLRPEDTKLRAIIEKQKERLLHPEKTIAAQVKQQVTKEGYVDFHLNQAKTYMEETEALAYKLIGAEDMELSTQIIWKDAIARGIKVDVLDRAENFLRFQKGDHIEYVKQASKTSKDNYVSVLMMENKVVTKLVLAEHDIRVPFGDSFSDQALALEAFSLFEDKQIVVKPKSTNYGWGISIFKNKFTLEDYQEALNIAFSYDSSVIIEEFIPGDEFRFLVINDKVEAVLKRVPANVTGDGIHTVRELVEEKNTDPLRGTDHLKPLEKIRTGPEETLMLSMQNLSWDSIPKAEEIIYLRENSNVSTGGDSIDYTEEMDDYFKEIAIRATQVLDAKICGVDIIVPRETIDRDKHAIIELNFNPAMHMHCFPYQGEQKKIGDKILDFLFD.

Residues Met-1–Ile-347 form a glutamate--cysteine ligase region. An ATP-grasp domain is found at Lys-514–Phe-768. Ser-541 to Arg-599 contributes to the ATP binding site. Residues Asp-721, Glu-738, and Asn-740 each coordinate Mg(2+). Asp-721, Glu-738, and Asn-740 together coordinate Mn(2+).

The protein in the N-terminal section; belongs to the glutamate--cysteine ligase type 1 family. Type 2 subfamily. Monomer. Requires Mg(2+) as cofactor. It depends on Mn(2+) as a cofactor.

The catalysed reaction is L-cysteine + L-glutamate + ATP = gamma-L-glutamyl-L-cysteine + ADP + phosphate + H(+). It catalyses the reaction gamma-L-glutamyl-L-cysteine + glycine + ATP = glutathione + ADP + phosphate + H(+). It functions in the pathway sulfur metabolism; glutathione biosynthesis; glutathione from L-cysteine and L-glutamate: step 1/2. The protein operates within sulfur metabolism; glutathione biosynthesis; glutathione from L-cysteine and L-glutamate: step 2/2. Its function is as follows. Synthesizes glutathione from L-glutamate and L-cysteine via gamma-L-glutamyl-L-cysteine. The polypeptide is Glutathione biosynthesis bifunctional protein GshAB (Listeria monocytogenes serovar 1/2a (strain ATCC BAA-679 / EGD-e)).